The primary structure comprises 113 residues: uncharacterized protein (113 aa).

The protein belongs to the Lactobacillus delbrueckii bacteriophages ORF5 protein family.

This is an uncharacterized protein from Lactobacillus delbrueckii (Lactococcus delbrueckii bacteriophage mv4).